We begin with the raw amino-acid sequence, 123 residues long: Small ribosomal subunit protein uS12 (123 aa).

At Asp-89 the chain carries 3-methylthioaspartic acid.

It belongs to the universal ribosomal protein uS12 family. In terms of assembly, part of the 30S ribosomal subunit. Contacts proteins S8 and S17. May interact with IF1 in the 30S initiation complex.

Its function is as follows. With S4 and S5 plays an important role in translational accuracy. Functionally, interacts with and stabilizes bases of the 16S rRNA that are involved in tRNA selection in the A site and with the mRNA backbone. Located at the interface of the 30S and 50S subunits, it traverses the body of the 30S subunit contacting proteins on the other side and probably holding the rRNA structure together. The combined cluster of proteins S8, S12 and S17 appears to hold together the shoulder and platform of the 30S subunit. The protein is Small ribosomal subunit protein uS12 of Caulobacter sp. (strain K31).